Consider the following 420-residue polypeptide: Acetyl-CoA acetyltransferase, mitochondrial (420 aa).

Residues 1–26 (MTSRALYSTRSQLCRHLAHKYLSRSY) constitute a mitochondrion transit peptide. The Acyl-thioester intermediate role is filled by cysteine 119. CoA contacts are provided by residues tyrosine 212, 251–253 (KVD), and lysine 256. Tyrosine 212 lines the K(+) pocket. Alanine 273, alanine 274, and alanine 276 together coordinate K(+). Serine 277 contacts CoA. K(+) is bound at residue valine 374. Cysteine 406 (proton donor/acceptor) is an active-site residue.

Belongs to the thiolase-like superfamily. Thiolase family. As to quaternary structure, homotetramer.

The protein resides in the mitochondrion. The enzyme catalyses 2 acetyl-CoA = acetoacetyl-CoA + CoA. The catalysed reaction is propanoyl-CoA + acetyl-CoA = 2-methyl-3-oxobutanoyl-CoA + CoA. The protein operates within lipid metabolism; fatty acid beta-oxidation. In terms of biological role, this is one of the enzymes that catalyzes the last step of the mitochondrial beta-oxidation pathway, an aerobic process breaking down fatty acids into acetyl-CoA. Using free coenzyme A/CoA, catalyzes the thiolytic cleavage of medium- to long-chain 3-oxoacyl-CoAs into acetyl-CoA and a fatty acyl-CoA shortened by two carbon atoms. The activity of the enzyme is reversible and it can also catalyze the condensation of two acetyl-CoA molecules into acetoacetyl-CoA. Thereby, it plays a major role in ketone body metabolism. The sequence is that of Acetyl-CoA acetyltransferase, mitochondrial (acat1) from Danio rerio (Zebrafish).